The primary structure comprises 164 residues: Protein LIGHT-DEPENDENT SHORT HYPOCOTYLS 8 (164 aa).

Residues Arg23–Lys150 form the ALOG domain. A Nuclear localization signal motif is present at residues Lys148–Leu152.

It belongs to the plant homeotic and developmental regulators ALOG protein family.

The protein resides in the nucleus. Its function is as follows. Probable transcription regulator that acts as a developmental regulator by promoting cell growth in response to light. The polypeptide is Protein LIGHT-DEPENDENT SHORT HYPOCOTYLS 8 (LSH8) (Arabidopsis thaliana (Mouse-ear cress)).